A 406-amino-acid chain; its full sequence is Probable endo-xylogalacturonan hydrolase A (406 aa).

The signal sequence occupies residues 1-18 (MISLNSIFLLSLVGLSRA). Positions 20-49 (PSRSETSPDRTIKPRAACTPTAGGSSSTDD) are disordered. 6 PbH1 repeats span residues 183–213 (TSNAQFTSLTMDATSNSDNLPKNTDAFDIGA), 214–235 (STYVTISSVAITNDDDCVAFKP), 237–257 (ANYVTVENVSCTGSHGISVGS), 266–289 (VQNVYARNITMINSSKAAGIKTYP), 299–320 (VKNATFEDFIVDGCDYAFQIQS), and 368–390 (TCDVTISGFEVKAPSGDAKILCG). The active-site Proton donor is the Asp-228. Asn-244 carries N-linked (GlcNAc...) asparagine glycosylation. His-251 is a catalytic residue. N-linked (GlcNAc...) asparagine glycans are attached at residues Asn-273, Asn-278, and Asn-301.

Belongs to the glycosyl hydrolase 28 family.

Its subcellular location is the secreted. Pectinolytic enzyme involved in the degradation of xylogalacturonan (xga), a galacturonan backbone heavily substituted with xylose, and which is one important component of the hairy regions of pectin. Activity requires a galacturonic acid backbone substituted with xylose. The protein is Probable endo-xylogalacturonan hydrolase A (xghA) of Aspergillus oryzae (strain ATCC 42149 / RIB 40) (Yellow koji mold).